The chain runs to 253 residues: Imidazole glycerol phosphate synthase subunit HisF (253 aa).

Residues Asp-11 and Asp-130 contribute to the active site.

Belongs to the HisA/HisF family. Heterodimer of HisH and HisF.

It is found in the cytoplasm. The enzyme catalyses 5-[(5-phospho-1-deoxy-D-ribulos-1-ylimino)methylamino]-1-(5-phospho-beta-D-ribosyl)imidazole-4-carboxamide + L-glutamine = D-erythro-1-(imidazol-4-yl)glycerol 3-phosphate + 5-amino-1-(5-phospho-beta-D-ribosyl)imidazole-4-carboxamide + L-glutamate + H(+). The protein operates within amino-acid biosynthesis; L-histidine biosynthesis; L-histidine from 5-phospho-alpha-D-ribose 1-diphosphate: step 5/9. Functionally, IGPS catalyzes the conversion of PRFAR and glutamine to IGP, AICAR and glutamate. The HisF subunit catalyzes the cyclization activity that produces IGP and AICAR from PRFAR using the ammonia provided by the HisH subunit. This chain is Imidazole glycerol phosphate synthase subunit HisF, found in Methylibium petroleiphilum (strain ATCC BAA-1232 / LMG 22953 / PM1).